We begin with the raw amino-acid sequence, 106 residues long: Small ribosomal subunit protein uS17 (106 aa).

It belongs to the universal ribosomal protein uS17 family. In terms of assembly, part of the 30S ribosomal subunit.

One of the primary rRNA binding proteins, it binds specifically to the 5'-end of 16S ribosomal RNA. This Picrophilus torridus (strain ATCC 700027 / DSM 9790 / JCM 10055 / NBRC 100828 / KAW 2/3) protein is Small ribosomal subunit protein uS17.